The primary structure comprises 313 residues: Protein FixB (313 aa).

255–283 (LYLAVGISGQIQHMVGANASQTIFAINKD) is an FAD binding site.

Belongs to the ETF alpha-subunit/FixB family. Heterodimer of FixA and FixB.

Its pathway is amine and polyamine metabolism; carnitine metabolism. In terms of biological role, required for anaerobic carnitine reduction. May bring reductant to CaiA. The chain is Protein FixB from Escherichia coli O7:K1 (strain IAI39 / ExPEC).